A 130-amino-acid polypeptide reads, in one-letter code: Small ribosomal subunit protein uS11c (130 aa).

This sequence belongs to the universal ribosomal protein uS11 family. In terms of assembly, part of the 30S ribosomal subunit.

Its subcellular location is the plastid. The protein localises to the chloroplast. The polypeptide is Small ribosomal subunit protein uS11c (Tupiella akineta (Green alga)).